Consider the following 1471-residue polypeptide: ABC multidrug transporter F (1471 aa).

Polar residues predominate over residues 1-19 (MALNSTDNRWSTGEDTPSE). A disordered region spans residues 1-40 (MALNSTDNRWSTGEDTPSEAQLPDGEERLDAAPDEKVTAE). Asparagine 4 carries an N-linked (GlcNAc...) asparagine glycan. Basic and acidic residues predominate over residues 25 to 40 (GEERLDAAPDEKVTAE). Asparagine 71 and asparagine 311 each carry an N-linked (GlcNAc...) asparagine glycan. Positions 133-387 (LKVPTMVRQA…FEQLGFQCPE (255 aa)) constitute an ABC transporter 1 domain. The helical transmembrane segment at 498–518 (VTLAMLIGNFFEALIIASIFY) threads the bilayer. An N-linked (GlcNAc...) asparagine glycan is attached at asparagine 519. 5 helical membrane passes run 532-552 (ALLF…ILTL), 578-598 (FIMS…TLYF), 607-627 (GPFF…SMFF), 641-661 (LAPS…TIPV), and 751-771 (IIIA…ELVA). The tract at residues 791–819 (RAKQGQRDEEQPSASAVPSEKYSEAPTPV) is disordered. Residues 829–1071 (FHWEDVCYDV…TLMDYFVRNG (243 aa)) form the ABC transporter 2 domain. A glycan (N-linked (GlcNAc...) asparagine) is linked at asparagine 842. 865 to 872 (GVSGAGKT) serves as a coordination point for ATP. The next 5 membrane-spanning stretches (helical) occupy residues 1167-1187 (YLYS…FSFF), 1201-1221 (FGVF…IPTF), 1252-1272 (FAWN…PVGL), 1288-1308 (LVFL…HLLI), and 1326-1346 (IMMY…GFWI). Asparagine 1386, asparagine 1422, and asparagine 1429 each carry an N-linked (GlcNAc...) asparagine glycan. A helical membrane pass occupies residues 1441-1461 (FGLLWVYVAVNTFGAVFLYWL).

This sequence belongs to the ABC transporter superfamily. ABCG family. PDR (TC 3.A.1.205) subfamily.

Its subcellular location is the cell membrane. It carries out the reaction fluconazole(in) + ATP + H2O = fluconazole(out) + ADP + phosphate + H(+). It catalyses the reaction itraconazole(in) + ATP + H2O = itraconazole(out) + ADP + phosphate + H(+). With respect to regulation, the efflux inhibitor FK506 impairs the transport activity. Pleiotropic ABC efflux transporter that shows a strong substrate specificity for the azole class of drugs such as lotrimazole (CLT), fluconazole (FLC), itraconazole (ITC), ketoconazole (KTC), posaconazole (POS), econazole (ECON), metconazole (MET), miconazole (MCZ), prochloraz (PCLZ), and tebuconazole (TEBZ). The protein is ABC multidrug transporter F of Aspergillus fumigatus (strain ATCC MYA-4609 / CBS 101355 / FGSC A1100 / Af293) (Neosartorya fumigata).